Reading from the N-terminus, the 679-residue chain is Transmembrane protein 214-B (679 aa).

The disordered stretch occupies residues 1–94; sequence MASGAPDGKW…KKKPQSGDSV (94 aa). Positions 18-30 are enriched in basic and acidic residues; sequence KSGERREGERKAL. N-linked (GlcNAc...) asparagine glycans are attached at residues Asn-70, Asn-298, and Asn-322. 2 helical membrane passes run 468 to 488 and 606 to 626; these read GGFP…GSVL and LLLH…EAAV.

It belongs to the TMEM214 family. In terms of assembly, constitutively interacts with CASP4; required for the localization of procaspase 4 to the ER.

It is found in the endoplasmic reticulum membrane. Its function is as follows. Critical mediator, in cooperation with CASP4, of endoplasmic reticulum-stress induced apoptosis. Required or the activation of CASP4 following endoplasmic reticulum stress. This is Transmembrane protein 214-B (tmem214-b) from Xenopus laevis (African clawed frog).